A 474-amino-acid chain; its full sequence is tRNA-2-methylthio-N(6)-dimethylallyladenosine synthase (474 aa).

The 118-residue stretch at Lys3–Gly120 folds into the MTTase N-terminal domain. [4Fe-4S] cluster-binding residues include Cys12, Cys49, Cys83, Cys157, Cys161, and Cys164. Residues Arg143 to Gln375 form the Radical SAM core domain. Residues Arg378–Arg441 enclose the TRAM domain.

It belongs to the methylthiotransferase family. MiaB subfamily. In terms of assembly, monomer. [4Fe-4S] cluster serves as cofactor.

It localises to the cytoplasm. It carries out the reaction N(6)-dimethylallyladenosine(37) in tRNA + (sulfur carrier)-SH + AH2 + 2 S-adenosyl-L-methionine = 2-methylsulfanyl-N(6)-dimethylallyladenosine(37) in tRNA + (sulfur carrier)-H + 5'-deoxyadenosine + L-methionine + A + S-adenosyl-L-homocysteine + 2 H(+). Its function is as follows. Catalyzes the methylthiolation of N6-(dimethylallyl)adenosine (i(6)A), leading to the formation of 2-methylthio-N6-(dimethylallyl)adenosine (ms(2)i(6)A) at position 37 in tRNAs that read codons beginning with uridine. This Sodalis glossinidius (strain morsitans) protein is tRNA-2-methylthio-N(6)-dimethylallyladenosine synthase.